A 262-amino-acid polypeptide reads, in one-letter code: Tryptophan synthase alpha chain (262 aa).

Residues E48 and D59 each act as proton acceptor in the active site.

Belongs to the TrpA family. Tetramer of two alpha and two beta chains.

It carries out the reaction (1S,2R)-1-C-(indol-3-yl)glycerol 3-phosphate + L-serine = D-glyceraldehyde 3-phosphate + L-tryptophan + H2O. The protein operates within amino-acid biosynthesis; L-tryptophan biosynthesis; L-tryptophan from chorismate: step 5/5. In terms of biological role, the alpha subunit is responsible for the aldol cleavage of indoleglycerol phosphate to indole and glyceraldehyde 3-phosphate. The protein is Tryptophan synthase alpha chain of Helicobacter pylori (strain G27).